A 218-amino-acid chain; its full sequence is Tubulin polymerization-promoting protein (218 aa).

A disordered region spans residues 1-45; it reads MADSKAKPTKAANKTPPKSPGDPAKAAKRLSLESEGANEGAAAAP. The interval 2 to 115 is mediates interaction with LIMK1; sequence ADSKAKPTKA…SCRTITFEQF (114 aa). T15 bears the Phosphothreonine mark. 3 positions are modified to phosphoserine: S19, S31, and S34. Over residues 33 to 45 the composition is skewed to low complexity; that stretch reads ESEGANEGAAAAP. Zn(2+)-binding residues include H60, H71, C79, and C82. Phosphothreonine is present on T91. S106 is subject to Phosphoserine. An O-linked (GlcNAc) serine glycan is attached at S151. Phosphoserine occurs at positions 158 and 159. The segment at 165 to 192 is disordered; sequence LTDTSKFTGSHKERFDQSGKGKGKAGRV. Over residues 174–183 the composition is skewed to basic and acidic residues; it reads SHKERFDQSG.

Belongs to the TPPP family. As to quaternary structure, homodimer. Binds tubulin; binding is inhibited by GTP. Interacts with MAPK1. Interacts with GAPDH; the interaction is direct. Interacts with LIMK1 (via the PDZ domain); the interaction is direct. Interacts with LIMK2. Interacts with HDAC6; thereby inhibiting the tubulin deacetylase activity of HDAC6. Interacts with aggregated SNCA; may have a pro-aggregatory role in synucleinopathies. Interacts with DYNLL1. Interacts (via C-terminus) with S100A2, S100A6 and S100B; these interactions inhibit TPPP dimerization. The cofactor is Mg(2+). In terms of processing, phosphorylated by LIMK1 on serine residues; phosphorylation may alter the tubulin polymerization activity. Phosphorylation by LIMK2, but not LIMK1, regulates astral microtubule organization at early stage of mitosis. Phosphorylation by ROCK1 at Ser-31, Ser-106 and Ser-158 inhibits interaction with HDAC6, resulting in decreased acetylation of tubulin, increased cell motility and entry into S-phase. Phosphorylation by CDK1 inhibits the microtubule polymerizing activity. Post-translationally, degraded by the proteasome; zinc-binding inhibits degradation by the proteasome. Predominantly expressed in mature oligodendrocytes.

It localises to the golgi outpost. It is found in the cytoplasm. Its subcellular location is the cytoskeleton. The protein localises to the microtubule organizing center. The protein resides in the nucleus. It localises to the spindle. It catalyses the reaction GTP + H2O = GDP + phosphate + H(+). Its function is as follows. Regulator of microtubule dynamics that plays a key role in myelination by promoting elongation of the myelin sheath. Acts as a microtubule nucleation factor in oligodendrocytes: specifically localizes to the postsynaptic Golgi apparatus region, also named Golgi outpost, and promotes microtubule nucleation, an important step for elongation of the myelin sheath. Required for both uniform polarized growth of distal microtubules as well as directing the branching of proximal processes. Shows magnesium-dependent GTPase activity; the role of the GTPase activity is unclear. In addition to microtubule nucleation activity, also involved in microtubule bundling and stabilization of existing microtubules, thereby maintaining the integrity of the microtubule network. Regulates microtubule dynamics by promoting tubulin acetylation: acts by inhibiting the tubulin deacetylase activity of HDAC6. Also regulates cell migration: phosphorylation by ROCK1 inhibits interaction with HDAC6, resulting in decreased acetylation of tubulin and increased cell motility. Plays a role in cell proliferation by regulating the G1/S-phase transition. Involved in astral microtubule organization and mitotic spindle orientation during early stage of mitosis; this process is regulated by phosphorylation by LIMK2. This chain is Tubulin polymerization-promoting protein, found in Rattus norvegicus (Rat).